The primary structure comprises 149 residues: Large ribosomal subunit protein uL15 (149 aa).

Residues 8 to 49 (HDLRPAAGSNKPKTRVGRGEASKGKTAGRGTKGTGARKQVPA) form a disordered region. Low complexity predominate over residues 31–45 (GKTAGRGTKGTGARK).

Belongs to the universal ribosomal protein uL15 family. As to quaternary structure, part of the 50S ribosomal subunit.

Functionally, binds to the 23S rRNA. The protein is Large ribosomal subunit protein uL15 of Corynebacterium aurimucosum (strain ATCC 700975 / DSM 44827 / CIP 107346 / CN-1) (Corynebacterium nigricans).